The chain runs to 295 residues: Putative ribose uptake protein RbsU (295 aa).

10 consecutive transmembrane segments (helical) span residues 5 to 24 (ALLI…TIAS), 34 to 56 (ILGT…GLAF), 63 to 80 (FFSI…IITF), 95 to 114 (TTAF…LGNW), 121 to 139 (LLGA…MTVW), 154 to 171 (AVLL…YSAA), 183 to 205 (FLPQ…TIKG), 220 to 237 (IFSG…LISA), 244 to 266 (LATG…IWFL), and 276 to 293 (TVTI…TITV).

It belongs to the GRP transporter (TC 2.A.7.5) family.

It localises to the cell membrane. Functionally, could be involved in the uptake of ribose. This Enterococcus faecalis (strain ATCC 700802 / V583) protein is Putative ribose uptake protein RbsU (rbsU).